Consider the following 156-residue polypeptide: Small ribosomal subunit protein uS7 (156 aa).

It belongs to the universal ribosomal protein uS7 family. As to quaternary structure, part of the 30S ribosomal subunit. Contacts proteins S9 and S11.

Its function is as follows. One of the primary rRNA binding proteins, it binds directly to 16S rRNA where it nucleates assembly of the head domain of the 30S subunit. Is located at the subunit interface close to the decoding center, probably blocks exit of the E-site tRNA. The polypeptide is Small ribosomal subunit protein uS7 (Streptomyces avermitilis (strain ATCC 31267 / DSM 46492 / JCM 5070 / NBRC 14893 / NCIMB 12804 / NRRL 8165 / MA-4680)).